The chain runs to 313 residues: D-alanine--D-alanine ligase (313 aa).

The ATP-grasp domain maps to 104–304 (KQALVPHGIP…YSDLVEAIIA (201 aa)). ATP is bound at residue 130–187 (PLPRPYVLKPVNEGSSVGVAIVTAEGNYGSPISAASKGPWQEFDQLLAEPFIRGRELT). The Mg(2+) site is built by D255, E271, and N273.

The protein belongs to the D-alanine--D-alanine ligase family. Mg(2+) is required as a cofactor. It depends on Mn(2+) as a cofactor.

The protein resides in the cytoplasm. The catalysed reaction is 2 D-alanine + ATP = D-alanyl-D-alanine + ADP + phosphate + H(+). It participates in cell wall biogenesis; peptidoglycan biosynthesis. Functionally, cell wall formation. This Novosphingobium aromaticivorans (strain ATCC 700278 / DSM 12444 / CCUG 56034 / CIP 105152 / NBRC 16084 / F199) protein is D-alanine--D-alanine ligase.